We begin with the raw amino-acid sequence, 174 residues long: Probable nicotinate-nucleotide adenylyltransferase (174 aa).

This sequence belongs to the NadD family.

The catalysed reaction is nicotinate beta-D-ribonucleotide + ATP + H(+) = deamido-NAD(+) + diphosphate. Its pathway is cofactor biosynthesis; NAD(+) biosynthesis; deamido-NAD(+) from nicotinate D-ribonucleotide: step 1/1. Functionally, catalyzes the reversible adenylation of nicotinate mononucleotide (NaMN) to nicotinic acid adenine dinucleotide (NaAD). In Helicobacter pylori (strain HPAG1), this protein is Probable nicotinate-nucleotide adenylyltransferase.